The chain runs to 353 residues: Draxin-B (353 aa).

The first 21 residues, 1 to 21, serve as a signal peptide directing secretion; it reads MASSWCLPLALLVSNLAVSHS. 3 disordered regions span residues 23–183, 198–222, and 246–268; these read EPSS…KEGS, TVMS…RGKV, and VDAW…SGNV. The span at 138-167 shows a compositional bias: basic residues; the sequence is GPHKGKAQGHGHHFDHRRHGGRRDKGRHTK. Basic residues predominate over residues 252-261; sequence SRKKDKRRSK. 2 N-linked (GlcNAc...) asparagine glycosylation sites follow: Asn262 and Asn267.

It belongs to the draxin family.

The protein resides in the secreted. In terms of biological role, chemorepulsive axon guidance protein required for the development of spinal cord and forebrain commissures. Acts as a chemorepulsive guidance protein for commissural axons during development. Able to inhibit or repel neurite outgrowth from dorsal spinal cord. The polypeptide is Draxin-B (draxin-B) (Salmo salar (Atlantic salmon)).